A 405-amino-acid chain; its full sequence is Probable succinyl-diaminopimelate desuccinylase (405 aa).

His-72 is a binding site for Zn(2+). Asp-74 is an active-site residue. Residue Asp-105 coordinates Zn(2+). Catalysis depends on Glu-139, which acts as the Proton acceptor. Zn(2+)-binding residues include Glu-140, Glu-165, and His-377.

It belongs to the peptidase M20A family. It depends on Zn(2+) as a cofactor. Requires Co(2+) as cofactor.

The enzyme catalyses N-succinyl-(2S,6S)-2,6-diaminopimelate + H2O = (2S,6S)-2,6-diaminopimelate + succinate. It functions in the pathway amino-acid biosynthesis; L-lysine biosynthesis via DAP pathway; LL-2,6-diaminopimelate from (S)-tetrahydrodipicolinate (succinylase route): step 3/3. The chain is Probable succinyl-diaminopimelate desuccinylase (dapE) from Staphylococcus epidermidis (strain ATCC 35984 / DSM 28319 / BCRC 17069 / CCUG 31568 / BM 3577 / RP62A).